The chain runs to 179 residues: Large ribosomal subunit protein uL6 (179 aa).

This sequence belongs to the universal ribosomal protein uL6 family. In terms of assembly, part of the 50S ribosomal subunit.

Its function is as follows. This protein binds to the 23S rRNA, and is important in its secondary structure. It is located near the subunit interface in the base of the L7/L12 stalk, and near the tRNA binding site of the peptidyltransferase center. The sequence is that of Large ribosomal subunit protein uL6 from Halothermothrix orenii (strain H 168 / OCM 544 / DSM 9562).